The chain runs to 749 residues: MEALIPVINKLQDVFNTVGADIIQLPQIVVVGTQSSGKSSVLESLVGRDLLPRGTGIVTRRPLILQLVHVAPEDKRKTTGEENDPATWKNSRHLSKGVEAEEWGKFLHTKNKLYTDFDEIRQEIENETERISGNNKGVSPEPIHLKIFSPNVVNLTLVDLPGMTKVPVGDQPKDIELQIRELILRFISNPNSIILAVTAANTDMATSEALKISREVDPDGRRTLAVITKLDLMDAGTDAMDVLMGRVIPVKLGIIGVVNRSQLDINNKKSVTDSIRDEYAFLQKKYPSLANRNGTKYLARTLNRLLMHHIRDCLPELKTRINVLAAQYQSLLNSYGEPVDDKSATLLQLITKFATEYCNTIEGTAKYIETSELCGGARICYIFHETFGRTLESVDPLGGLNTIDILTAIRNATGPRPALFVPEVSFELLVKRQIKRLEEPSLRCVELVHEEMQRIIQHCSNYSTQELLRFPKLHDAIVEVVTCLLRKRLPVTNEMVHNLVAIELAYINTKHPDFADACGLMNNNIEEQRRNRLARELPSAVSRDKSSKVPSALAPASQEPSPAASAEADGKLIQESRRETKNAASGGGGVGDAVQEPTTGNWRGMLKTSKAEELLAEEKSKPIPIMPASPQKGHAVNLLDVPVPVARKLSAREQRDCEVIERLIKSYFLIVRKNIQDSVPKAVMHFLVNHVKDTLQSELVGQLYKSSLLDDLLTESEDMAQRRKEAADMLKALQGASQIIAEIRETHLW.

Methionine 1 bears the N-acetylmethionine mark. The Dynamin-type G domain occupies 22–315; the sequence is IIQLPQIVVV…LMHHIRDCLP (294 aa). The tract at residues 32–39 is G1 motif; that stretch reads GTQSSGKS. Residue 32 to 40 participates in GTP binding; the sequence is GTQSSGKSS. Residues 58 to 60 are G2 motif; sequence VTR. A disordered region spans residues 74-93; sequence DKRKTTGEENDPATWKNSRH. Residues 159 to 162 form a G3 motif region; the sequence is DLPG. A G4 motif region spans residues 228–231; that stretch reads TKLD. GTP contacts are provided by residues 228–234 and 259–262; these read TKLDLMD and NRSQ. Residues 258-261 are G5 motif; the sequence is VNRS. The segment at 357–502 is middle domain; that stretch reads YCNTIEGTAK…NEMVHNLVAI (146 aa). The interaction with GSK3B stretch occupies residues 461-698; sequence NYSTQELLRF…NHVKDTLQSE (238 aa). Positions 515-582 are b domain; sequence ADACGLMNNN…IQESRRETKN (68 aa). The interval 536–604 is disordered; the sequence is ELPSAVSRDK…QEPTTGNWRG (69 aa). Serine 542 carries the phosphoserine modification. Residues lysine 545 and lysine 548 each participate in a glycyl lysine isopeptide (Lys-Gly) (interchain with G-Cter in SUMO) cross-link. Positions 550 to 567 are enriched in low complexity; that stretch reads PSALAPASQEPSPAASAE. Serine 561 carries the post-translational modification Phosphoserine. A compositionally biased stretch (basic and acidic residues) spans 568 to 581; it reads ADGKLIQESRRETK. Glycyl lysine isopeptide (Lys-Gly) (interchain with G-Cter in SUMO) cross-links involve residues lysine 571 and lysine 581. Residues threonine 598 and threonine 599 are each glycosylated (O-linked (GlcNAc) threonine). A Glycyl lysine isopeptide (Lys-Gly) (interchain with G-Cter in SUMO) cross-link involves residue lysine 607. N6-acetyllysine; alternate is present on lysine 610. Lysine 610 is covalently cross-linked (Glycyl lysine isopeptide (Lys-Gly) (interchain with G-Cter in SUMO); alternate). A Glycyl lysine isopeptide (Lys-Gly) (interchain with G-Cter in SUMO) cross-link involves residue lysine 619. Residue serine 620 is modified to Phosphoserine. A Glycyl lysine isopeptide (Lys-Gly) (interchain with G-Cter in SUMO) cross-link involves residue lysine 621. Position 629 is a phosphoserine; by CDK1 and PINK1 (serine 629). A Phosphoserine; by CAMK1 and PKA modification is found at serine 650. Position 657 is an S-nitrosocysteine (cysteine 657). The GED domain occupies 657 to 748; it reads CEVIERLIKS…IIAEIRETHL (92 aa). An important for homodimerization region spans residues 667-681; the sequence is YFLIVRKNIQDSVPK.

Belongs to the TRAFAC class dynamin-like GTPase superfamily. Dynamin/Fzo/YdjA family. In terms of assembly, homotetramer; dimerizes through the N-terminal GTP-middle region of one molecule binding to the GED domain of another DNM1L molecule. Oligomerizes in a GTP-dependent manner to form membrane-associated tubules with a spiral pattern. Interacts with GSK3B and MARCHF5. Interacts (via the GTPase and B domains) with UBE2I; the interaction promotes sumoylation of DNM1L, mainly in its B domain. Interacts with PPP3CA; the interaction dephosphorylates DNM1L and regulates its transition to mitochondria. Interacts with BCL2L1 isoform BCL-X(L) and CLTA; DNM1L and BCL2L1 isoform BCL-X(L) may form a complex in synaptic vesicles that also contains clathrin and MFF. Interacts with MFF; the interaction is inhinited by C11orf65/MFI. Interacts with FIS1. Interacts with MIEF2 and MIEF1; GTP-dependent, regulates GTP hydrolysis and DNM1L oligomerization. Interacts with PGAM5; this interaction leads to dephosphorylation at Ser-656 and activation of GTPase activity and eventually to mitochondria fragmentation. Interacts with RALBP1; during mitosis, recruits DNM1L to the mitochondrion and mediates its activation by the mitotic kinase cyclin B-CDK1. Phosphorylation/dephosphorylation events on two sites near the GED domain regulate mitochondrial fission. Phosphorylation on Ser-650 by CAMK1 and PKA inhibits the GTPase activity, leading to a defect in mitochondrial fission promoting mitochondrial elongation. Dephosphorylated on this site by PPP3CA which promotes mitochondrial fission. Phosphorylation on Ser-629 by CDK1 and PINK1 activates the GTPase activity and promotes mitochondrial fission. Phosphorylated in a circadian manner at Ser-650. In terms of processing, sumoylated on various lysine residues within the B domain, probably by MUL1. Sumoylation positively regulates mitochondrial fission. Desumoylated by SENP5 during G2/M transition of mitosis. Appears to be linked to its catalytic activity. Post-translationally, S-nitrosylation increases DNM1L dimerization, mitochondrial fission and causes neuronal damage. O-GlcNAcylation augments the level of the GTP-bound active form of DNM1L and induces translocation from the cytoplasm to mitochondria in cardiomyocytes. It also decreases phosphorylation at Ser-650. In terms of processing, ubiquitination by MARCHF5 affects mitochondrial morphology.

The protein localises to the cytoplasm. The protein resides in the cytosol. Its subcellular location is the golgi apparatus. It is found in the endomembrane system. It localises to the mitochondrion outer membrane. The protein localises to the peroxisome. The protein resides in the membrane. Its subcellular location is the clathrin-coated pit. It is found in the cytoplasmic vesicle. It localises to the secretory vesicle. The protein localises to the synaptic vesicle membrane. It carries out the reaction GTP + H2O = GDP + phosphate + H(+). Functions in mitochondrial and peroxisomal division. Mediates membrane fission through oligomerization into membrane-associated tubular structures that wrap around the scission site to constrict and sever the mitochondrial membrane through a GTP hydrolysis-dependent mechanism. The specific recruitment at scission sites is mediated by membrane receptors like MFF, MIEF1 and MIEF2 for mitochondrial membranes. While the recruitment by the membrane receptors is GTP-dependent, the following hydrolysis of GTP induces the dissociation from the receptors and allows DNM1L filaments to curl into closed rings that are probably sufficient to sever a double membrane. Acts downstream of PINK1 to promote mitochondrial fission in a PRKN-dependent manner. Plays an important role in mitochondrial fission during mitosis. Through its function in mitochondrial division, ensures the survival of at least some types of postmitotic neurons, including Purkinje cells, by suppressing oxidative damage. Required for normal brain development, including that of cerebellum. Facilitates developmentally regulated apoptosis during neural tube formation. Required for a normal rate of cytochrome c release and caspase activation during apoptosis; this requirement may depend upon the cell type and the physiological apoptotic cues. Required for formation of endocytic vesicles. Proposed to regulate synaptic vesicle membrane dynamics through association with BCL2L1 isoform Bcl-X(L) which stimulates its GTPase activity in synaptic vesicles; the function may require its recruitment by MFF to clathrin-containing vesicles. Required for programmed necrosis execution. Rhythmic control of its activity following phosphorylation at Ser-650 is essential for the circadian control of mitochondrial ATP production. The sequence is that of Dynamin-1-like protein from Bos taurus (Bovine).